A 106-amino-acid chain; its full sequence is Probable insulin-like peptide beta-type 2 (106 aa).

A signal peptide spans 1 to 15; sequence MNAIIFCLLFTTVTA. A propeptide spanning residues 16-56 is cleaved from the precursor; it reads TYEVFGKGIEHRNEHLIINQLDIIPVESTPTPNRASRVQKR. Intrachain disulfides connect Cys58–Cys86, Cys70–Cys99, Cys73–Cys100, and Cys85–Cys90.

This sequence belongs to the insulin family.

It is found in the secreted. The sequence is that of Probable insulin-like peptide beta-type 2 (ins-2) from Caenorhabditis elegans.